A 176-amino-acid chain; its full sequence is uncharacterized protein (176 aa).

Residues 1-20 (MIKKISIILITLFIIQLTKS) form the signal peptide. The interval 26–46 (NNNNNNNNNNNNNNNNNNNNN) is disordered. The N-linked (GlcNAc...) asparagine glycan is linked to Asn120.

The protein belongs to the Dictyostelium gerABC family.

It localises to the secreted. This is an uncharacterized protein from Dictyostelium discoideum (Social amoeba).